Consider the following 380-residue polypeptide: Apelin receptor (380 aa).

The Extracellular segment spans residues 1-30 (MEEGGDFDNYYGADNQSECEYTDWKSSGAL). An N-linked (GlcNAc...) asparagine glycan is attached at Asn-15. 2 cysteine pairs are disulfide-bonded: Cys-19/Cys-281 and Cys-102/Cys-181. Residues 31-54 (IPAIYMLVFLLGTTGNGLVLWTVF) traverse the membrane as a helical segment. Residues 55-64 (RSSREKRRSA) lie on the Cytoplasmic side of the membrane. Residues 65–86 (DIFIASLAVADLTFVVTLPLWA) form a helical membrane-spanning segment. Residues 87–99 (TYTYRDYDWPFGT) are Extracellular-facing. A helical membrane pass occupies residues 100–125 (FFCKLSSYLIFVNMYASVFCLTGLSF). Residues 126–146 (DRYLAIVRPVANARLRLRVSG) are Cytoplasmic-facing. Residues 147–164 (AVATAVLWVLAALLAMPV) form a helical membrane-spanning segment. Topologically, residues 165-198 (MVLRTTGDLENTTKVQCYMDYSMVATVSSEWAWE) are extracellular. N-linked (GlcNAc...) asparagine glycosylation occurs at Asn-175. The helical transmembrane segment at 199 to 223 (VGLGVSSTTVGFVVPFTIMLTCYFF) threads the bilayer. Residues 224 to 246 (IAQTIAGHFRKERIEGLRKRRRL) are Cytoplasmic-facing. Residues 247-270 (LSIIVVLVVTFALCWMPYHLVKTL) form a helical membrane-spanning segment. Residues 271–289 (YMLGSLLHWPCDFDLFLMN) lie on the Extracellular side of the membrane. The chain crosses the membrane as a helical span at residues 290-312 (IFPYCTCISYVNSCLNPFLYAFF). Residues 313–380 (DPRFRQACTS…PYSQETLVVD (68 aa)) are Cytoplasmic-facing. Residues 342-351 (KSASYSSGHS) are compositionally biased toward low complexity. The tract at residues 342-380 (KSASYSSGHSQGPGPNMGKGGEQMHEKSIPYSQETLVVD) is disordered. The segment covering 371–380 (PYSQETLVVD) has biased composition (polar residues).

The protein belongs to the G-protein coupled receptor 1 family. In terms of assembly, homodimer; dimerization inhibits APLNR-mediated G protein and beta-arrestin signaling pathways compared to monomeric APLNR. As to expression, expressed in heart, brain, kidney, stomach, spleen, thymus, lung, ovary, small intestine and colon, adipose tissues and pancreas. Expressed in glial cells, astrocytes and neuronal subpopulations. Expressed in embryonic (ESCs) and induced (iPSCs) pluripotent stem cells.

It is found in the cell membrane. G protein-coupled receptor for peptide hormones apelin (APLN) and apelin receptor early endogenous ligand (APELA/ELA), that plays a role in the regulation of normal cardiovascular function and fluid homeostasis. When acting as apelin receptor, activates both G(i) protein pathway that inhibits adenylate cyclase activity, and the beta-arrestin pathway that promotes internalization of the receptor. APLNR/APJ also functions as mechanoreceptor that is activated by pathological stimuli in a G-protein-independent fashion to induce beta-arrestin signaling, hence eliciting cardiac hypertrophy. However, the presence of apelin ligand blunts cardiac hypertrophic induction from APLNR/APJ on response to pathological stimuli. Plays a key role in early development such as gastrulation, blood vessels formation and heart morphogenesis by acting as a APELA receptor. May promote angioblast migration toward the embryonic midline, i.e. the position of the future vessel formation, during vasculogenesis. Promotes sinus venosus (SV)-derived endothelial cells migration into the developing heart to promote coronary blood vessel development. Also plays a role in various processes in adults such as regulation of blood vessel formation, blood pressure, heart contractility and heart failure. Functionally, (Microbial infection) Alternative coreceptor with CD4 for HIV-1 infection; may be involved in the development of AIDS dementia. In Homo sapiens (Human), this protein is Apelin receptor.